The chain runs to 423 residues: Adenylosuccinate synthetase (423 aa).

Residues 12–18 (GDEGKGK) and 40–42 (GHT) contribute to the GTP site. D13 (proton acceptor) is an active-site residue. Mg(2+) is bound by residues D13 and G40. Residues 13–16 (DEGK), 38–41 (NAGH), T129, R143, Q224, T239, and R303 each bind IMP. H41 acts as the Proton donor in catalysis. 299-305 (SVTGRQR) is a binding site for substrate. Residues R305, 331–333 (KGD), and 412–414 (SVG) each bind GTP.

Belongs to the adenylosuccinate synthetase family. In terms of assembly, homodimer. Mg(2+) is required as a cofactor.

Its subcellular location is the cytoplasm. It catalyses the reaction IMP + L-aspartate + GTP = N(6)-(1,2-dicarboxyethyl)-AMP + GDP + phosphate + 2 H(+). Its pathway is purine metabolism; AMP biosynthesis via de novo pathway; AMP from IMP: step 1/2. Functionally, plays an important role in the de novo pathway of purine nucleotide biosynthesis. Catalyzes the first committed step in the biosynthesis of AMP from IMP. The polypeptide is Adenylosuccinate synthetase (Flavobacterium johnsoniae (strain ATCC 17061 / DSM 2064 / JCM 8514 / BCRC 14874 / CCUG 350202 / NBRC 14942 / NCIMB 11054 / UW101) (Cytophaga johnsonae)).